Consider the following 170-residue polypeptide: Calcineurin subunit B type 1 (170 aa).

Gly-2 is lipidated: N-myristoyl glycine. 4 consecutive EF-hand domains span residues 18–46, 50–85, 87–122, and 128–163; these read DEIK…FMSL, QQNP…FSVK, DKEQ…MVGN, and QLQQ…LDIH. Asp-31, Asp-33, Ser-35, Ser-37, Glu-42, Asp-63, Asp-65, Asn-67, Glu-69, Glu-74, Asp-100, Asp-102, Asp-104, Tyr-106, and Glu-111 together coordinate Ca(2+). Tyr-106 bears the Phosphotyrosine mark. Residues 131-136 are calcineurin A binding; the sequence is QIVDKT. Residues Asp-141, Asp-143, Asp-145, Arg-147, and Glu-152 each contribute to the Ca(2+) site.

It belongs to the calcineurin regulatory subunit family. Forms a complex composed of a calmodulin-dependent catalytic subunit (also known as calcineurin A) and a regulatory Ca(2+)-binding subunit (also known as calcineurin B). There are three catalytic subunits, each encoded by a separate gene (PPP3CA, PPP3CB, and PPP3CC) and two regulatory subunits which are also encoded by separate genes (PPP3R1 and PPP3R2). The interaction between the 2 subunits is Ca(2+)-independent. Interacts with catalytic subunit PPP3CA/calcineurin A. Interacts with catalytic subunit PPP3CB/calcineurin A. Interacts with CIB1 (via C-terminal region); the interaction increases upon cardiomyocyte hypertrophy. Interacts with RCAN1. Interacts with SPATA33 (via PQIIIT motif).

It localises to the cytoplasm. The protein localises to the cytosol. The protein resides in the cell membrane. It is found in the sarcolemma. In terms of biological role, regulatory subunit of calcineurin, a calcium-dependent, calmodulin stimulated protein phosphatase. Confers calcium sensitivity. This Bos taurus (Bovine) protein is Calcineurin subunit B type 1 (PPP3R1).